Consider the following 454-residue polypeptide: DNA primase small subunit (454 aa).

Catalysis depends on residues E66, D131, and D133. Mg(2+) is bound by residues D131 and D133. Mn(2+)-binding residues include D131 and D133. 131–133 contributes to the a ribonucleoside 5'-triphosphate binding site; it reads DID. 4 residues coordinate Zn(2+): C143, C144, C150, and C153. The short motif at 143 to 153 is the Zinc knuckle motif element; the sequence is CCSKTNICEKC. A ribonucleoside 5'-triphosphate is bound at residue 182 to 188; the sequence is SGRRGIH. Mg(2+) is bound at residue D333. Residue D333 participates in Mn(2+) binding. 342 to 345 provides a ligand contact to a ribonucleoside 5'-triphosphate; that stretch reads HLLK. The disordered stretch occupies residues 385 to 420; it reads DKNSQNDNGHGPTMETNTTENQKDNARGQSNKGHGF. 2 stretches are compositionally biased toward polar residues: residues 389-404 and 411-420; these read QNDN…NTTE and RGQSNKGHGF.

The protein belongs to the eukaryotic-type primase small subunit family. In terms of assembly, heterodimer of a catalytic subunit spp1/pri1 and a regulatory subunit spp2/pri2, also known as the DNA primase complex. Component of the alpha DNA polymerase complex (also known as the alpha DNA polymerase-primase complex) consisting of four subunits: the catalytic subunit pol1, the accessory subunit spb70/pol12, and the primase complex subunits spp1/pri1 and spp2/pri2 respectively. Requires Mg(2+) as cofactor. The cofactor is Mn(2+).

It is found in the nucleus. The catalysed reaction is ssDNA + n NTP = ssDNA/pppN(pN)n-1 hybrid + (n-1) diphosphate.. In terms of biological role, catalytic subunit of the DNA primase complex and component of the DNA polymerase alpha complex (also known as the alpha DNA polymerase-primase complex - primosome/replisome) which play an essential role in the initiation of DNA synthesis. During the S phase of the cell cycle, the DNA polymerase alpha complex (composed of a catalytic subunit pol1, an accessory subunit spb70/pol12 and two primase subunits, the catalytic subunit spp1/pri1 and the regulatory subunit spp2/pri2) is recruited to DNA at the replicative forks. The primase subunit of the polymerase alpha complex initiates DNA synthesis by oligomerising short RNA primers on both leading and lagging strands. The chain is DNA primase small subunit from Schizosaccharomyces pombe (strain 972 / ATCC 24843) (Fission yeast).